The primary structure comprises 642 residues: Threonine--tRNA ligase (642 aa).

The TGS domain maps to 1–61 (MPVITLPDGS…ESDAQLAIIT (61 aa)). The tract at residues 243–534 (DHRKIGKQLD…LTEEYAGFYP (292 aa)) is catalytic. Zn(2+) contacts are provided by Cys-334, His-385, and His-511.

This sequence belongs to the class-II aminoacyl-tRNA synthetase family. As to quaternary structure, homodimer. The cofactor is Zn(2+).

It is found in the cytoplasm. It carries out the reaction tRNA(Thr) + L-threonine + ATP = L-threonyl-tRNA(Thr) + AMP + diphosphate + H(+). In terms of biological role, catalyzes the attachment of threonine to tRNA(Thr) in a two-step reaction: L-threonine is first activated by ATP to form Thr-AMP and then transferred to the acceptor end of tRNA(Thr). Also edits incorrectly charged L-seryl-tRNA(Thr). The protein is Threonine--tRNA ligase of Serratia proteamaculans (strain 568).